We begin with the raw amino-acid sequence, 545 residues long: Chaperonin GroEL (545 aa).

ATP contacts are provided by residues 29–32 (TIGP), 86–90 (DGTTT), glycine 413, 478–480 (NAA), and aspartate 494.

The protein belongs to the chaperonin (HSP60) family. As to quaternary structure, forms a cylinder of 14 subunits composed of two heptameric rings stacked back-to-back. Interacts with the co-chaperonin GroES.

Its subcellular location is the cytoplasm. The catalysed reaction is ATP + H2O + a folded polypeptide = ADP + phosphate + an unfolded polypeptide.. Together with its co-chaperonin GroES, plays an essential role in assisting protein folding. The GroEL-GroES system forms a nano-cage that allows encapsulation of the non-native substrate proteins and provides a physical environment optimized to promote and accelerate protein folding. The protein is Chaperonin GroEL of Exiguobacterium sibiricum (strain DSM 17290 / CCUG 55495 / CIP 109462 / JCM 13490 / 255-15).